Here is a 542-residue protein sequence, read N- to C-terminus: Glutamyl-tRNA(Gln) amidotransferase subunit B, mitochondrial (542 aa).

A mitochondrion-targeting transit peptide spans 1-66; it reads MRVFRRFYQV…PNSHTSFFDI (66 aa).

The protein belongs to the GatB/GatE family. GatB subfamily. In terms of assembly, subunit of the heterotrimeric GatFAB amidotransferase (AdT) complex, composed of A, B and F subunits.

It localises to the mitochondrion. The enzyme catalyses L-glutamyl-tRNA(Gln) + L-glutamine + ATP + H2O = L-glutaminyl-tRNA(Gln) + L-glutamate + ADP + phosphate + H(+). Functionally, allows the formation of correctly charged Gln-tRNA(Gln) through the transamidation of misacylated Glu-tRNA(Gln) in the mitochondria. The reaction takes place in the presence of glutamine and ATP through an activated gamma-phospho-Glu-tRNA(Gln). This chain is Glutamyl-tRNA(Gln) amidotransferase subunit B, mitochondrial, found in Zygosaccharomyces rouxii (strain ATCC 2623 / CBS 732 / NBRC 1130 / NCYC 568 / NRRL Y-229).